We begin with the raw amino-acid sequence, 457 residues long: Cysteine--tRNA ligase (457 aa).

Cys30 serves as a coordination point for Zn(2+). The 'HIGH' region signature appears at 32-42 (PTVYDRAHLGN). Positions 213, 238, and 242 each coordinate Zn(2+). Residues 271–275 (KMSKS) carry the 'KMSKS' region motif. Lys274 is an ATP binding site.

It belongs to the class-I aminoacyl-tRNA synthetase family. In terms of assembly, monomer. Requires Zn(2+) as cofactor.

The protein localises to the cytoplasm. The enzyme catalyses tRNA(Cys) + L-cysteine + ATP = L-cysteinyl-tRNA(Cys) + AMP + diphosphate. The protein is Cysteine--tRNA ligase of Ruegeria sp. (strain TM1040) (Silicibacter sp.).